The primary structure comprises 415 residues: Alpha-N-acetylgalactosaminidase (415 aa).

Positions 1-17 are cleaved as a signal peptide; the sequence is MLQKTVLLLALVAQVLM. Intrachain disulfides connect C38–C80, C42–C49, and C127–C158. Substrate contacts are provided by residues 78-79 and K154; that span reads DD. D156 functions as the Nucleophile in the catalytic mechanism. N-linked (GlcNAc...) asparagine glycosylation occurs at N177. C187 and C209 form a disulfide bridge. S188 lines the substrate pocket. N201 is a glycosylation site (N-linked (GlcNAc...) asparagine). R213 and D217 together coordinate substrate. D217 functions as the Proton donor in the catalytic mechanism. Phosphoserine occurs at positions 322 and 332. A glycan (N-linked (GlcNAc...) asparagine) is linked at N385.

This sequence belongs to the glycosyl hydrolase 27 family. In terms of assembly, homodimer.

It localises to the lysosome. The catalysed reaction is Cleavage of non-reducing alpha-(1-&gt;3)-N-acetylgalactosamine residues from human blood group A and AB mucin glycoproteins, Forssman hapten and blood group A lacto series glycolipids.. It carries out the reaction a neolactoside IV(3)-alpha-GalNAc,IV(2)-alpha-Fuc-nLc4Cer(d18:1(4E)) + H2O = a neolactoside IV(2)-alpha-Fuc-nLc4Cer(d18:1(4E)) + N-acetyl-alpha-D-galactosamine. It catalyses the reaction a neolactoside IV(3)-alpha-GalNAc,IV(2)-alpha-Fuc-nLc4Cer(d18:0) + H2O = a neolactoside IV(2)-alpha-Fuc-nLc4Cer(d18:0) + N-acetyl-alpha-D-galactosamine. The enzyme catalyses a globoside IV3GalNAc-Gb4Cer + H2O = N-acetyl-alpha-D-galactosamine + a globoside Gb4Cer. In terms of biological role, removes terminal alpha-N-acetylgalactosamine residues from glycolipids and glycopeptides. Required for the breakdown of glycolipids. The protein is Alpha-N-acetylgalactosaminidase (Naga) of Mus musculus (Mouse).